Consider the following 164-residue polypeptide: UPF0251 protein MM_1448 (164 aa).

Positions 91 to 100 (GDYRMPRGDR) are enriched in basic and acidic residues. The disordered stretch occupies residues 91–123 (GDYRMPRGDRTGPAGQGPAGGGRGRGQGKGRGG). Gly residues predominate over residues 104–115 (AGQGPAGGGRGR).

The protein belongs to the UPF0251 family.

This is UPF0251 protein MM_1448 from Methanosarcina mazei (strain ATCC BAA-159 / DSM 3647 / Goe1 / Go1 / JCM 11833 / OCM 88) (Methanosarcina frisia).